Consider the following 347-residue polypeptide: MNNRLQPAPCIELDGAQGEGGGQILRTALTLSMLTGTPFRIERIRAGRSKPGLMRQHLTAVQAAAEVSGATVEGAEAGSQALAFAPGPIHGGDYRFAIGTAGSCTLVLQTVLPALWFADAPSTVAVSGGTHNRAAPPVDFLIRAWQPLLARMGVTQTLALKRHGFYPAGGGEVLATVTPCAGRLGALHLTERGALRELSGQGIVANVRPGVARRELEALAARVPGVVGSVRELSPAEGPGNALVLDAVHEHVTEVFTGFGERGVPAEQVAHGVASAALRYLHSTAAVDEYLADQLVLPMALAGAGCFTAVTASPHLTTNIAVIEKFLPVHITVQAERDASVVRVQVN.

ATP-binding positions include Q109 and 290–294 (YLADQ). H315 functions as the Tele-AMP-histidine intermediate in the catalytic mechanism.

Belongs to the RNA 3'-terminal cyclase family. Type 1 subfamily.

It localises to the cytoplasm. The catalysed reaction is a 3'-end 3'-phospho-ribonucleotide-RNA + ATP = a 3'-end 2',3'-cyclophospho-ribonucleotide-RNA + AMP + diphosphate. Functionally, catalyzes the conversion of 3'-phosphate to a 2',3'-cyclic phosphodiester at the end of RNA. The mechanism of action of the enzyme occurs in 3 steps: (A) adenylation of the enzyme by ATP; (B) transfer of adenylate to an RNA-N3'P to produce RNA-N3'PP5'A; (C) and attack of the adjacent 2'-hydroxyl on the 3'-phosphorus in the diester linkage to produce the cyclic end product. The biological role of this enzyme is unknown but it is likely to function in some aspects of cellular RNA processing. This is RNA 3'-terminal phosphate cyclase from Ralstonia nicotianae (strain ATCC BAA-1114 / GMI1000) (Ralstonia solanacearum).